Consider the following 133-residue polypeptide: Small ribosomal subunit protein uS8 (133 aa).

Belongs to the universal ribosomal protein uS8 family. As to quaternary structure, part of the 30S ribosomal subunit. Contacts proteins S5 and S12.

In terms of biological role, one of the primary rRNA binding proteins, it binds directly to 16S rRNA central domain where it helps coordinate assembly of the platform of the 30S subunit. This Prochlorococcus marinus (strain MIT 9303) protein is Small ribosomal subunit protein uS8.